An 828-amino-acid chain; its full sequence is Periplasmic nitrate reductase 1 (828 aa).

The segment at residues 1-30 (MKMTRRAFVKANAAASAAAVAGITLPASAA) is a signal peptide (tat-type signal). Positions 41–97 (IKWDKAPCRFCGTGCSVLVGTQNGRVVATQGDPEAPVNKGLNCIKGYFLSKIMYGKD) constitute a 4Fe-4S Mo/W bis-MGD-type domain. [4Fe-4S] cluster-binding residues include Cys-48, Cys-51, Cys-55, and Cys-83. Mo-bis(molybdopterin guanine dinucleotide) is bound by residues Lys-85, Gln-152, Asn-177, Cys-181, 214 to 221 (WGSNMAEM), 245 to 249 (STYYH), 264 to 266 (QTD), Met-374, Gln-378, Asn-484, 510 to 511 (SD), Lys-533, Asp-560, and 718 to 727 (TGRVLEHWHT). Phe-794 serves as a coordination point for substrate. Mo-bis(molybdopterin guanine dinucleotide) is bound by residues Asn-802 and Lys-819.

Belongs to the prokaryotic molybdopterin-containing oxidoreductase family. NasA/NapA/NarB subfamily. Component of the periplasmic nitrate reductase NapAB complex composed of NapA and NapB. The cofactor is [4Fe-4S] cluster. It depends on Mo-bis(molybdopterin guanine dinucleotide) as a cofactor. Post-translationally, predicted to be exported by the Tat system. The position of the signal peptide cleavage has not been experimentally proven.

Its subcellular location is the periplasm. The enzyme catalyses 2 Fe(II)-[cytochrome] + nitrate + 2 H(+) = 2 Fe(III)-[cytochrome] + nitrite + H2O. Functionally, catalytic subunit of the periplasmic nitrate reductase complex NapAB. Receives electrons from NapB and catalyzes the reduction of nitrate to nitrite. The protein is Periplasmic nitrate reductase 1 of Photobacterium profundum (strain SS9).